Reading from the N-terminus, the 637-residue chain is 1-deoxy-D-xylulose-5-phosphate synthase (637 aa).

Residues histidine 71 and 112-114 each bind thiamine diphosphate; that span reads SHA. Aspartate 144 contributes to the Mg(2+) binding site. Thiamine diphosphate contacts are provided by residues 145-146, asparagine 173, tyrosine 284, and glutamate 365; that span reads GA. Position 173 (asparagine 173) interacts with Mg(2+).

The protein belongs to the transketolase family. DXPS subfamily. As to quaternary structure, homodimer. Mg(2+) is required as a cofactor. It depends on thiamine diphosphate as a cofactor.

The enzyme catalyses D-glyceraldehyde 3-phosphate + pyruvate + H(+) = 1-deoxy-D-xylulose 5-phosphate + CO2. Its pathway is metabolic intermediate biosynthesis; 1-deoxy-D-xylulose 5-phosphate biosynthesis; 1-deoxy-D-xylulose 5-phosphate from D-glyceraldehyde 3-phosphate and pyruvate: step 1/1. Functionally, catalyzes the acyloin condensation reaction between C atoms 2 and 3 of pyruvate and glyceraldehyde 3-phosphate to yield 1-deoxy-D-xylulose-5-phosphate (DXP). The sequence is that of 1-deoxy-D-xylulose-5-phosphate synthase from Mycolicibacterium gilvum (strain PYR-GCK) (Mycobacterium gilvum (strain PYR-GCK)).